Consider the following 352-residue polypeptide: Chorismate synthase (352 aa).

Arg48 contacts NADP(+). Residues 125-127 (RSS), 237-238 (NA), Gly278, 293-297 (KPTSS), and Arg319 each bind FMN.

Belongs to the chorismate synthase family. As to quaternary structure, homotetramer. The cofactor is FMNH2.

It catalyses the reaction 5-O-(1-carboxyvinyl)-3-phosphoshikimate = chorismate + phosphate. Its pathway is metabolic intermediate biosynthesis; chorismate biosynthesis; chorismate from D-erythrose 4-phosphate and phosphoenolpyruvate: step 7/7. Its function is as follows. Catalyzes the anti-1,4-elimination of the C-3 phosphate and the C-6 proR hydrogen from 5-enolpyruvylshikimate-3-phosphate (EPSP) to yield chorismate, which is the branch point compound that serves as the starting substrate for the three terminal pathways of aromatic amino acid biosynthesis. This reaction introduces a second double bond into the aromatic ring system. The sequence is that of Chorismate synthase from Francisella tularensis subsp. tularensis (strain FSC 198).